We begin with the raw amino-acid sequence, 269 residues long: Tryptophan synthase alpha chain (269 aa).

Residues glutamate 50 and aspartate 61 each act as proton acceptor in the active site.

The protein belongs to the TrpA family. As to quaternary structure, tetramer of two alpha and two beta chains.

The catalysed reaction is (1S,2R)-1-C-(indol-3-yl)glycerol 3-phosphate + L-serine = D-glyceraldehyde 3-phosphate + L-tryptophan + H2O. It functions in the pathway amino-acid biosynthesis; L-tryptophan biosynthesis; L-tryptophan from chorismate: step 5/5. The alpha subunit is responsible for the aldol cleavage of indoleglycerol phosphate to indole and glyceraldehyde 3-phosphate. The protein is Tryptophan synthase alpha chain of Francisella tularensis subsp. holarctica (strain FTNF002-00 / FTA).